Reading from the N-terminus, the 240-residue chain is uncharacterized protein (240 aa).

A C2H2-type zinc finger spans residues 3-27 (LKCLECDKLLSSIEMAEFHSTKTSH). Disordered stretches follow at residues 21–43 (HSTKTSHDQFEETEEEIKKRSPE) and 120–171 (AEIE…RFSI). A compositionally biased stretch (basic and acidic residues) spans 120-136 (AEIERDKKRRAAERENK). Residues 155–166 (SSSTCTRTPPTS) show a composition bias toward low complexity.

This is an uncharacterized protein from Schizosaccharomyces pombe (strain 972 / ATCC 24843) (Fission yeast).